The sequence spans 239 residues: Carboxy-S-adenosyl-L-methionine synthase (239 aa).

Residues Tyr-35, 64–66, 88–89, and Arg-195 contribute to the S-adenosyl-L-methionine site; these read GCS and DN.

The protein belongs to the class I-like SAM-binding methyltransferase superfamily. Cx-SAM synthase family. In terms of assembly, homodimer.

It carries out the reaction prephenate + S-adenosyl-L-methionine = carboxy-S-adenosyl-L-methionine + 3-phenylpyruvate + H2O. In terms of biological role, catalyzes the conversion of S-adenosyl-L-methionine (SAM) to carboxy-S-adenosyl-L-methionine (Cx-SAM). This Helicobacter pylori (strain HPAG1) protein is Carboxy-S-adenosyl-L-methionine synthase.